The primary structure comprises 182 residues: uncharacterized protein (182 aa).

Transmembrane regions (helical) follow at residues 58-78 and 81-101; these read ILFG…YVVY and PVSI…IIIW.

To M.jannaschii MJ0803.

The protein localises to the cell membrane. This is an uncharacterized protein from Methanocaldococcus jannaschii (strain ATCC 43067 / DSM 2661 / JAL-1 / JCM 10045 / NBRC 100440) (Methanococcus jannaschii).